A 528-amino-acid polypeptide reads, in one-letter code: Extracellular serine/threonine protein CG31145 (528 aa).

The Cytoplasmic segment spans residues 1-12; it reads MAVLRTMKLKER. Positions 1 to 76 are excised as a propeptide; it reads MAVLRTMKLK…LHEFKRKFLQ (76 aa). A helical transmembrane segment spans residues 13 to 33; it reads LVISLGATLVLLTLLLIVDVQ. Over 34–528 the chain is Lumenal; it reads MDFGVANRHL…VDGSETDVSS (495 aa). Positions 77 to 130 are disordered; the sequence is KSNASGSKEASTQAGASQSGGATSGQDAAAGASGGAAGPGTSRSTSTRKPTPHD. N79 carries an N-linked (GlcNAc...) asparagine glycan. A compositionally biased stretch (low complexity) spans 86 to 107; it reads ASTQAGASQSGGATSGQDAAAG. An N-linked (GlcNAc...) asparagine glycan is attached at N173. The ATP site is built by Q220, K236, and E257. E257 lines the Mn(2+) pocket. N-linked (GlcNAc...) asparagine glycosylation occurs at N286. Cystine bridges form between C312–C328 and C317–C321. 339-342 provides a ligand contact to ATP; the sequence is AAFL. Intrachain disulfides connect C376/C450 and C451/C510. D408 is an active-site residue. E413 is a binding site for ATP. N420 carries an N-linked (GlcNAc...) asparagine glycan. ATP is bound at residue D428. Position 428 (D428) interacts with Mn(2+).

The protein belongs to the FAM20 family. The cofactor is Mn(2+). In embryos, prominently expressed in midline glia, salivary gland, intestine and dorsal vessel (heart). Not associated with biomineralization.

The protein localises to the golgi apparatus membrane. It localises to the secreted. It catalyses the reaction L-seryl-[protein] + ATP = O-phospho-L-seryl-[protein] + ADP + H(+). The enzyme catalyses L-threonyl-[protein] + ATP = O-phospho-L-threonyl-[protein] + ADP + H(+). Golgi serine/threonine protein kinase that phosphorylates secretory pathway proteins within Ser-x-Glu/pSer motifs. The protein is Extracellular serine/threonine protein CG31145 of Drosophila melanogaster (Fruit fly).